The following is a 756-amino-acid chain: NUT family member 2F (756 aa).

Disordered stretches follow at residues 173–200, 293–438, 511–639, and 653–756; these read GNARPWPQGAHGEGSLAPSQAKARPDDS, IQKS…TSDP, RAAP…LPGM, and RLSQ…HCSQ. Over residues 304 to 321 the composition is skewed to pro residues; it reads SLPPPAPPRLEPRGPPAP. A compositionally biased stretch (basic and acidic residues) spans 417-427; it reads EGQREKGKVEQ. The span at 543–560 shows a compositional bias: polar residues; that stretch reads QRVSVETSPPQTAAQDPQ. Positions 654–665 are enriched in low complexity; that stretch reads LSQSPVPSSGLL. Positions 746 to 756 are enriched in basic residues; sequence SRRKKKRHCSQ.

Belongs to the NUT family.

This Homo sapiens (Human) protein is NUT family member 2F (NUTM2F).